Here is a 150-residue protein sequence, read N- to C-terminus: Histone deacetylase complex subunit SAP18 (150 aa).

It belongs to the SAP18 family. As to quaternary structure, forms a complex with SIN3 and histone deacetylase. Interacts with the N-terminal residues of TRL. Interacts with BCD; in vitro and yeast cells.

The protein localises to the nucleus. The protein resides in the cytoplasm. In terms of biological role, involved in the tethering of the SIN3 complex to core histone proteins. Interacts with bicoid (bcd) to repress transcription of bicoid target genes in the anterior tip of the embryo; a process known as retraction. Interacts with Trl and binds to Polycomb response elements at the bithorax complex. May contribute to the regulation of other homeotic gene expressions. The sequence is that of Histone deacetylase complex subunit SAP18 (Bin1) from Drosophila melanogaster (Fruit fly).